The following is a 347-amino-acid chain: GTPase Obg (347 aa).

The Obg domain occupies 1 to 159; sequence MQFLDQAKIY…AWVWLRLKLL (159 aa). The tract at residues 124 to 144 is disordered; sequence GRGNASYKSSTNRAPRQHGPG. Residues 160-327 enclose the OBG-type G domain; the sequence is ADVGLVGLPN…ILDQLITMTG (168 aa). GTP is bound by residues 166 to 173, 191 to 195, 212 to 215, 279 to 282, and 308 to 310; these read GLPNAGKS, FTTLH, DIPG, NKID, and SGA. 2 residues coordinate Mg(2+): Ser-173 and Thr-193.

The protein belongs to the TRAFAC class OBG-HflX-like GTPase superfamily. OBG GTPase family. Monomer. Requires Mg(2+) as cofactor.

The protein localises to the cytoplasm. Its function is as follows. An essential GTPase which binds GTP, GDP and possibly (p)ppGpp with moderate affinity, with high nucleotide exchange rates and a fairly low GTP hydrolysis rate. Plays a role in control of the cell cycle, stress response, ribosome biogenesis and in those bacteria that undergo differentiation, in morphogenesis control. In Zymomonas mobilis subsp. mobilis (strain ATCC 31821 / ZM4 / CP4), this protein is GTPase Obg.